The sequence spans 141 residues: uncharacterized protein (141 aa).

A run of 3 helical transmembrane segments spans residues 32–52 (LIVL…TSII), 69–89 (IIAL…IAGF), and 109–129 (FTGY…PIAY).

It localises to the cell membrane. This is an uncharacterized protein from Methanocaldococcus jannaschii (strain ATCC 43067 / DSM 2661 / JAL-1 / JCM 10045 / NBRC 100440) (Methanococcus jannaschii).